We begin with the raw amino-acid sequence, 177 residues long: Large ribosomal subunit protein uL6 (177 aa).

It belongs to the universal ribosomal protein uL6 family. In terms of assembly, part of the 50S ribosomal subunit.

This protein binds to the 23S rRNA, and is important in its secondary structure. It is located near the subunit interface in the base of the L7/L12 stalk, and near the tRNA binding site of the peptidyltransferase center. This Pectobacterium atrosepticum (strain SCRI 1043 / ATCC BAA-672) (Erwinia carotovora subsp. atroseptica) protein is Large ribosomal subunit protein uL6.